We begin with the raw amino-acid sequence, 386 residues long: Succinyl-diaminopimelate desuccinylase (386 aa).

Histidine 75 contributes to the Zn(2+) binding site. The active site involves aspartate 77. Aspartate 108 lines the Zn(2+) pocket. Catalysis depends on glutamate 138, which acts as the Proton acceptor. Zn(2+) is bound by residues glutamate 139, glutamate 167, and histidine 356.

This sequence belongs to the peptidase M20A family. DapE subfamily. Homodimer. Zn(2+) serves as cofactor. The cofactor is Co(2+).

The enzyme catalyses N-succinyl-(2S,6S)-2,6-diaminopimelate + H2O = (2S,6S)-2,6-diaminopimelate + succinate. Its pathway is amino-acid biosynthesis; L-lysine biosynthesis via DAP pathway; LL-2,6-diaminopimelate from (S)-tetrahydrodipicolinate (succinylase route): step 3/3. Catalyzes the hydrolysis of N-succinyl-L,L-diaminopimelic acid (SDAP), forming succinate and LL-2,6-diaminopimelate (DAP), an intermediate involved in the bacterial biosynthesis of lysine and meso-diaminopimelic acid, an essential component of bacterial cell walls. The sequence is that of Succinyl-diaminopimelate desuccinylase from Caulobacter vibrioides (strain ATCC 19089 / CIP 103742 / CB 15) (Caulobacter crescentus).